The following is a 125-amino-acid chain: Small ribosomal subunit protein eS6 (125 aa).

The tract at residues 90–109 is disordered; the sequence is KGPGFRPKEKGERRKKTVRG.

The protein belongs to the eukaryotic ribosomal protein eS6 family. As to quaternary structure, part of the 30S ribosomal subunit.

The polypeptide is Small ribosomal subunit protein eS6 (Pyrococcus furiosus (strain ATCC 43587 / DSM 3638 / JCM 8422 / Vc1)).